An 802-amino-acid polypeptide reads, in one-letter code: Serine/threonine-protein kinase zyg-8 (802 aa).

Residues 1–13 (MPQTSAWQLNDTT) show a composition bias toward polar residues. The disordered stretch occupies residues 1 to 102 (MPQTSAWQLN…SAPSTSSAHR (102 aa)). Positions 15-24 (RPPPPPPPPG) are enriched in pro residues. The segment covering 89–99 (SPSSSAPSTSS) has biased composition (low complexity). 2 consecutive Doublecortin domains span residues 211–298 (KRLR…VDYS) and 340–423 (RIIK…ADDL). Residues 430–470 (HKSVGSGTSSNMRRTSRRSTMPNRNESLRHDRSGSVIPDQD) are disordered. Low complexity predominate over residues 434-454 (GSGTSSNMRRTSRRSTMPNRN). A Protein kinase domain is found at 482-743 (FQLVRLIGDG…AGELLNDEWM (262 aa)). ATP-binding positions include 488-496 (IGDGNTAVV) and Lys512. Asp604 (proton acceptor) is an active-site residue.

It belongs to the protein kinase superfamily. CAMK Ser/Thr protein kinase family. CaMK subfamily. Interacts with tac-1. As to expression, expressed in AFD thermosensory neurons. Expressed in cells near the nerve ring, in motor neurons in the ventral nerve cord and in the six touch receptor neurons including ALML/R, PLML/R and AVM and PVM. Expressed in hypodermal and neural tissues and in the germline.

It localises to the cytoplasm. The protein localises to the cytoskeleton. The protein resides in the microtubule organizing center. It is found in the centrosome. Its subcellular location is the spindle. It carries out the reaction L-seryl-[protein] + ATP = O-phospho-L-seryl-[protein] + ADP + H(+). The enzyme catalyses L-threonyl-[protein] + ATP = O-phospho-L-threonyl-[protein] + ADP + H(+). Its function is as follows. Probable kinase. Kinase activity may be involved in positioning of spindle poles in meiosis and mitosis. Plays a role in spindle positioning during asymmetric division of one-cell stage embryos. Affects spindle position by promoting microtubule assembly during anaphase. Plays a role in the assembly and stability of oocyte spindle, perhaps balancing the forces in the spindle and maintaining their morphology during metaphase. Plays a role in cell division and in embryonic viability up until gastrulation. Required for neuronal morphology and polarity and restricting ectopic process outgrowth; probably as a result of a role in maintaining microtubule integrity. Involved in maintaining neuronal microtubule number, length and packing. May promote axonal and synaptic growth. Plays a role in regulating thermotaxis responses in AFD thermosensory neurons. Required for touch sensitivity in adult touch response receptor neurons. The sequence is that of Serine/threonine-protein kinase zyg-8 from Caenorhabditis elegans.